The primary structure comprises 292 residues: Small ribosomal subunit biogenesis GTPase RsgA (292 aa).

One can recognise a CP-type G domain in the interval 64–221 (RSELFRPAVA…LVDTPGFSSL (158 aa)). GTP-binding positions include 113–116 (NKMD) and 164–172 (GPSGVGKST). Residues Cys245, Cys250, His252, and Cys258 each coordinate Zn(2+).

This sequence belongs to the TRAFAC class YlqF/YawG GTPase family. RsgA subfamily. As to quaternary structure, monomer. Associates with 30S ribosomal subunit, binds 16S rRNA. It depends on Zn(2+) as a cofactor.

It localises to the cytoplasm. Functionally, one of several proteins that assist in the late maturation steps of the functional core of the 30S ribosomal subunit. Helps release RbfA from mature subunits. May play a role in the assembly of ribosomal proteins into the subunit. Circularly permuted GTPase that catalyzes slow GTP hydrolysis, GTPase activity is stimulated by the 30S ribosomal subunit. The sequence is that of Small ribosomal subunit biogenesis GTPase RsgA from Clostridium botulinum (strain ATCC 19397 / Type A).